The sequence spans 34 residues: Photosystem II reaction center protein M (34 aa).

A helical transmembrane segment spans residues 5–25; that stretch reads ILALIAVALFISIPTAFLVII.

It belongs to the PsbM family. As to quaternary structure, PSII is composed of 1 copy each of membrane proteins PsbA, PsbB, PsbC, PsbD, PsbE, PsbF, PsbH, PsbI, PsbJ, PsbK, PsbL, PsbM, PsbT, PsbX, PsbY, PsbZ, Psb30/Ycf12, at least 3 peripheral proteins of the oxygen-evolving complex and a large number of cofactors. It forms dimeric complexes.

It localises to the plastid. It is found in the chloroplast thylakoid membrane. One of the components of the core complex of photosystem II (PSII). PSII is a light-driven water:plastoquinone oxidoreductase that uses light energy to abstract electrons from H(2)O, generating O(2) and a proton gradient subsequently used for ATP formation. It consists of a core antenna complex that captures photons, and an electron transfer chain that converts photonic excitation into a charge separation. This subunit is found at the monomer-monomer interface. The protein is Photosystem II reaction center protein M of Welwitschia mirabilis (Tree tumbo).